A 373-amino-acid polypeptide reads, in one-letter code: UDP-N-acetylglucosamine--N-acetylmuramyl-(pentapeptide) pyrophosphoryl-undecaprenol N-acetylglucosamine transferase (373 aa).

UDP-N-acetyl-alpha-D-glucosamine-binding positions include 14–16, Asn-128, Arg-165, Ser-199, and Gln-295; that span reads TAG.

The protein belongs to the glycosyltransferase 28 family. MurG subfamily.

Its subcellular location is the cell membrane. It carries out the reaction di-trans,octa-cis-undecaprenyl diphospho-N-acetyl-alpha-D-muramoyl-L-alanyl-D-glutamyl-meso-2,6-diaminopimeloyl-D-alanyl-D-alanine + UDP-N-acetyl-alpha-D-glucosamine = di-trans,octa-cis-undecaprenyl diphospho-[N-acetyl-alpha-D-glucosaminyl-(1-&gt;4)]-N-acetyl-alpha-D-muramoyl-L-alanyl-D-glutamyl-meso-2,6-diaminopimeloyl-D-alanyl-D-alanine + UDP + H(+). It functions in the pathway cell wall biogenesis; peptidoglycan biosynthesis. In terms of biological role, cell wall formation. Catalyzes the transfer of a GlcNAc subunit on undecaprenyl-pyrophosphoryl-MurNAc-pentapeptide (lipid intermediate I) to form undecaprenyl-pyrophosphoryl-MurNAc-(pentapeptide)GlcNAc (lipid intermediate II). The protein is UDP-N-acetylglucosamine--N-acetylmuramyl-(pentapeptide) pyrophosphoryl-undecaprenol N-acetylglucosamine transferase of Mycobacterium sp. (strain JLS).